Here is a 367-residue protein sequence, read N- to C-terminus: Peptide chain release factor 2 (367 aa).

Gln254 bears the N5-methylglutamine mark.

It belongs to the prokaryotic/mitochondrial release factor family. Methylated by PrmC. Methylation increases the termination efficiency of RF2.

The protein localises to the cytoplasm. In terms of biological role, peptide chain release factor 2 directs the termination of translation in response to the peptide chain termination codons UGA and UAA. This is Peptide chain release factor 2 from Janthinobacterium sp. (strain Marseille) (Minibacterium massiliensis).